Reading from the N-terminus, the 652-residue chain is Sodium-dependent phosphate transporter 2 (652 aa).

Residues 1-5 (MAMDE) are Extracellular-facing. A helical membrane pass occupies residues 6–26 (YLWMVILGFIIAFILAFSVGA). Residues 27–46 (NDVANSFGTAVGSGVVTLRQ) lie on the Cytoplasmic side of the membrane. Residues 47-67 (ACILASIFETTGSVLLGAKVG) traverse the membrane as a helical segment. Residues 68-86 (ETIRKGIIDVNLYNETVET) lie on the Extracellular side of the membrane. The N-linked (GlcNAc...) asparagine glycan is linked to Asn-81. The helical transmembrane segment at 87–107 (LMAGEVSAMVGSAVWQLIASF) threads the bilayer. The Cytoplasmic segment spans residues 108–109 (LR). A helical transmembrane segment spans residues 110–130 (LPISGTHCIVGSTIGFSLVAI). Topologically, residues 131–142 (GTKGVQWMELVK) are extracellular. The helical transmembrane segment at 143–163 (IVASWFISPLLSGFMSGLLFV) threads the bilayer. Residues 164–190 (LIRIFILKKEDPVPNGLRALPVFYAAT) are Cytoplasmic-facing. Residues 191–211 (IAINVFSIMYTGAPVLGLVLP) traverse the membrane as a helical segment. At 212 to 213 (MW) the chain is on the extracellular side. The helical transmembrane segment at 214-234 (AIALISFGVALLFAFFVWLFV) threads the bilayer. The Cytoplasmic portion of the chain corresponds to 235-482 (CPWMRRKITG…EEKEEKDAPE (248 aa)). Phosphoserine occurs at positions 253, 256, 259, and 268. A disordered region spans residues 273-307 (ELPGAKANDDSTIPLTGAAGETLGTSEGTSAGSHP). The span at 295-304 (LGTSEGTSAG) shows a compositional bias: polar residues. Phosphoserine is present on residues Ser-316 and Ser-385. The disordered stretch occupies residues 458–477 (SELADPDQPREDPAEEEKEE). The helical transmembrane segment at 483-503 (VHLLFHFLQVLTACFGSFAHG) threads the bilayer. The Extracellular portion of the chain corresponds to 504–530 (GNDVSNAIGPLVALWLIYKQGGVTQEA). Residues 531–551 (ATPVWLLFYGGVGICTGLWVW) traverse the membrane as a helical segment. Residues 552-571 (GRRVIQTMGKDLTPITPSSG) lie on the Cytoplasmic side of the membrane. The chain crosses the membrane as a helical span at residues 572-586 (FTIELASAFTVVIAS). The Extracellular portion of the chain corresponds to 587 to 593 (NIGLPVS). A helical transmembrane segment spans residues 594-609 (TTHCKVGSVVAVGWIR). The Cytoplasmic segment spans residues 610-621 (SRKAVDWRLFRN). The helical transmembrane segment at 622-642 (IFVAWFVTVPVAGLFSAAVMA) threads the bilayer. The Extracellular portion of the chain corresponds to 643 to 652 (LLMYGILPYV).

It belongs to the inorganic phosphate transporter (PiT) (TC 2.A.20) family. Homodimer. In terms of tissue distribution, ubiquitously expressed.

Its subcellular location is the cell membrane. The protein localises to the apical cell membrane. It catalyses the reaction 2 Na(+)(out) + phosphate(out) = 2 Na(+)(in) + phosphate(in). In terms of biological role, sodium-phosphate symporter which preferentially transports the monovalent form of phosphate with a stoichiometry of two sodium ions per phosphate ion. Plays a critical role in the determination of bone quality and strength by providing phosphate for bone mineralization. Required to maintain normal cerebrospinal fluid phosphate levels. Mediates phosphate-induced calcification of vascular smooth muscle cells (VCMCs) and can functionally compensate for loss of SLC20A1 in VCMCs. (Microbial infection) Functions as a retroviral receptor and confers human cells susceptibility to infection to amphotropic murine leukemia virus (A-MuLV), 10A1 murine leukemia virus (10A1 MLV) and some feline leukemia virus subgroup B (FeLV-B) variants. The chain is Sodium-dependent phosphate transporter 2 (SLC20A2) from Homo sapiens (Human).